Here is a 930-residue protein sequence, read N- to C-terminus: Probable SapB synthase (930 aa).

The region spanning 256–516 is the Protein kinase domain; the sequence is YTVESALHFS…GSTRADETTR (261 aa). ATP is bound by residues 262-270 and K285; that span reads LHFSNGGGV. The Proton acceptor role is filled by D395. The chain crosses the membrane as a helical span at residues 447-467; it reads YALACLRIVLFLPLTSLLAVD. The segment covering 501 to 527 has biased composition (basic and acidic residues); sequence GSTRVDGSTRADETTRADETTRLDVTT. 2 disordered regions span residues 501-558 and 911-930; these read GSTR…RDSM and PFLPPPRRSGGPLTRPHQEP. Residues 532–546 show a composition bias toward low complexity; sequence APDAARRPAGPVAPV. Residues 547–556 are compositionally biased toward basic and acidic residues; the sequence is RPDDWPRSRD.

This sequence in the N-terminal section; belongs to the protein kinase superfamily.

The protein resides in the cell membrane. In terms of biological role, required for aerial hyphae formation. Probably involved in processing the precursor of SapB to its mature form. In Streptomyces coelicolor (strain ATCC BAA-471 / A3(2) / M145), this protein is Probable SapB synthase.